The sequence spans 161 residues: MLIRGRAIVYGDKIDTDVIIPAKYLVYTDPAILGQHAMEPIDPEFPKKAKGAILVAGRAFGMGSSREQAAIALKGAGVLAVVAESFARIFYRNAINVGLPVLQAPGVRAKVREGDELEVDLTGGVVRNLTTGEAIQGKPLAGLPLEILKAGGLLQYLKNRA.

It belongs to the LeuD family. LeuD type 2 subfamily. In terms of assembly, heterodimer of LeuC and LeuD.

It catalyses the reaction (2R,3S)-3-isopropylmalate = (2S)-2-isopropylmalate. It participates in amino-acid biosynthesis; L-leucine biosynthesis; L-leucine from 3-methyl-2-oxobutanoate: step 2/4. Catalyzes the isomerization between 2-isopropylmalate and 3-isopropylmalate, via the formation of 2-isopropylmaleate. The sequence is that of 3-isopropylmalate dehydratase small subunit from Pyrobaculum calidifontis (strain DSM 21063 / JCM 11548 / VA1).